We begin with the raw amino-acid sequence, 338 residues long: Flap endonuclease 1 (338 aa).

An N-domain region spans residues 1–98 (MGTDIGDLLQ…ETLSRRKEVR (98 aa)). Residues Asp-27, Asp-80, Glu-152, Glu-154, Asp-173, Asp-175, and Asp-236 each contribute to the Mg(2+) site. The tract at residues 116 to 257 (AAYKYAQASS…TALKLIKKHG (142 aa)) is I-domain. Residues 330-338 (RQKTLDQWF) form an interaction with PCNA region.

This sequence belongs to the XPG/RAD2 endonuclease family. FEN1 subfamily. As to quaternary structure, interacts with PCNA. PCNA stimulates the nuclease activity without altering cleavage specificity. Mg(2+) is required as a cofactor.

Its function is as follows. Structure-specific nuclease with 5'-flap endonuclease and 5'-3' exonuclease activities involved in DNA replication and repair. During DNA replication, cleaves the 5'-overhanging flap structure that is generated by displacement synthesis when DNA polymerase encounters the 5'-end of a downstream Okazaki fragment. Binds the unpaired 3'-DNA end and kinks the DNA to facilitate 5' cleavage specificity. Cleaves one nucleotide into the double-stranded DNA from the junction in flap DNA, leaving a nick for ligation. Also involved in the base excision repair (BER) pathway. Acts as a genome stabilization factor that prevents flaps from equilibrating into structures that lead to duplications and deletions. Also possesses 5'-3' exonuclease activity on nicked or gapped double-stranded DNA. The polypeptide is Flap endonuclease 1 (Methanosarcina acetivorans (strain ATCC 35395 / DSM 2834 / JCM 12185 / C2A)).